Consider the following 332-residue polypeptide: 1-acyl-sn-glycerol-3-phosphate acyltransferase CHLREDRAFT_174358 (332 aa).

The helical transmembrane segment at 96-116 (FLLSLPLFVTMMVMAPLVLAF) threads the bilayer. Positions 163 to 168 (HQSFLD) match the HXXXXD motif motif. A helical transmembrane segment spans residues 185 to 205 (TSNFLIPIIGWSMFLTGHVMI). Positions 235–238 (EGTR) match the EGTR motif motif.

It belongs to the 1-acyl-sn-glycerol-3-phosphate acyltransferase family.

Its subcellular location is the membrane. It catalyses the reaction a 1-acyl-sn-glycero-3-phosphate + an acyl-CoA = a 1,2-diacyl-sn-glycero-3-phosphate + CoA. It functions in the pathway phospholipid metabolism; CDP-diacylglycerol biosynthesis; CDP-diacylglycerol from sn-glycerol 3-phosphate: step 2/3. In terms of biological role, converts lysophosphatidic acid (LPA) into phosphatidic acid by incorporating an acyl moiety at the sn-2 position of the glycerol backbone. This chain is 1-acyl-sn-glycerol-3-phosphate acyltransferase CHLREDRAFT_174358, found in Chlamydomonas reinhardtii (Chlamydomonas smithii).